The following is a 267-amino-acid chain: Large ribosomal subunit protein uL4 (267 aa).

The protein belongs to the universal ribosomal protein uL4 family. As to quaternary structure, part of the 50S ribosomal subunit.

Functionally, one of the primary rRNA binding proteins, this protein initially binds near the 5'-end of the 23S rRNA. It is important during the early stages of 50S assembly. It makes multiple contacts with different domains of the 23S rRNA in the assembled 50S subunit and ribosome. In terms of biological role, forms part of the polypeptide exit tunnel. This Saccharolobus islandicus (strain M.16.27) (Sulfolobus islandicus) protein is Large ribosomal subunit protein uL4.